The primary structure comprises 322 residues: MSKAQYALVGDIGGTNARFALVARDSFELEHIQVLPCNDYANLDEAVRDYLAHHPEAEVHEACMAFACPVHGDTIKMTNNHWTFNKADMQARLGFDTFKYVNDFTAMALGTLHVADERLQKVGGGEGKDGAARLVIGPGTGLGVSGLVRTMTDWAPLSTEGGHVDFAPTDEVEISVLRILKERFGRVSVERILCGEGLLNLYRSLCEIDGVEPAHTQPSQVTEAALANSDVIAHKTLKLFCAIFGRVTGNAALTLGALGGVYVCGGIIPRFIEFFRDSDFRQCFEDKGRMRDYLGGIPVYVVTETYTGLLGAAEALKNQEVH.

Residue 10 to 15 coordinates ATP; it reads GDIGGT.

The protein belongs to the bacterial glucokinase family.

The protein resides in the cytoplasm. It catalyses the reaction D-glucose + ATP = D-glucose 6-phosphate + ADP + H(+). This Hahella chejuensis (strain KCTC 2396) protein is Glucokinase.